We begin with the raw amino-acid sequence, 203 residues long: Glycerol-3-phosphate acyltransferase (203 aa).

A run of 4 helical transmembrane segments spans residues 6–26 (LTLL…AVLV), 82–102 (AISL…PIFF), 118–138 (APIG…LLLI), and 141–161 (YSSL…WWLD).

Belongs to the PlsY family. In terms of assembly, probably interacts with PlsX.

It localises to the cell inner membrane. The enzyme catalyses an acyl phosphate + sn-glycerol 3-phosphate = a 1-acyl-sn-glycero-3-phosphate + phosphate. The protein operates within lipid metabolism; phospholipid metabolism. Its function is as follows. Catalyzes the transfer of an acyl group from acyl-phosphate (acyl-PO(4)) to glycerol-3-phosphate (G3P) to form lysophosphatidic acid (LPA). This enzyme utilizes acyl-phosphate as fatty acyl donor, but not acyl-CoA or acyl-ACP. In Shewanella putrefaciens (strain CN-32 / ATCC BAA-453), this protein is Glycerol-3-phosphate acyltransferase.